Reading from the N-terminus, the 148-residue chain is 3-dehydroquinate dehydratase (148 aa).

The active-site Proton acceptor is the Y22. Positions 73, 79, and 86 each coordinate substrate. Catalysis depends on H99, which acts as the Proton donor. Substrate-binding positions include 100-101 and R110; that span reads LS.

It belongs to the type-II 3-dehydroquinase family. In terms of assembly, homododecamer.

The catalysed reaction is 3-dehydroquinate = 3-dehydroshikimate + H2O. The protein operates within metabolic intermediate biosynthesis; chorismate biosynthesis; chorismate from D-erythrose 4-phosphate and phosphoenolpyruvate: step 3/7. In terms of biological role, catalyzes a trans-dehydration via an enolate intermediate. The chain is 3-dehydroquinate dehydratase from Jannaschia sp. (strain CCS1).